The following is a 335-amino-acid chain: Holliday junction branch migration complex subunit RuvB (335 aa).

Positions 1-181 (MERIVEVEKF…FGMHFRLQFY (181 aa)) are large ATPase domain (RuvB-L). ATP contacts are provided by residues Leu20, Arg21, Gly62, Lys65, Thr66, Thr67, 128-130 (EDF), Arg171, Tyr181, and Arg218. Residue Thr66 participates in Mg(2+) binding. The interval 182-252 (TPQELAQIIT…RTQKALEALG (71 aa)) is small ATPAse domain (RuvB-S). Residues 255-335 (ERGFDELDLK…LTPNIQNSLF (81 aa)) are head domain (RuvB-H). Positions 309 and 314 each coordinate DNA.

This sequence belongs to the RuvB family. In terms of assembly, homohexamer. Forms an RuvA(8)-RuvB(12)-Holliday junction (HJ) complex. HJ DNA is sandwiched between 2 RuvA tetramers; dsDNA enters through RuvA and exits via RuvB. An RuvB hexamer assembles on each DNA strand where it exits the tetramer. Each RuvB hexamer is contacted by two RuvA subunits (via domain III) on 2 adjacent RuvB subunits; this complex drives branch migration. In the full resolvosome a probable DNA-RuvA(4)-RuvB(12)-RuvC(2) complex forms which resolves the HJ.

Its subcellular location is the cytoplasm. The catalysed reaction is ATP + H2O = ADP + phosphate + H(+). Functionally, the RuvA-RuvB-RuvC complex processes Holliday junction (HJ) DNA during genetic recombination and DNA repair, while the RuvA-RuvB complex plays an important role in the rescue of blocked DNA replication forks via replication fork reversal (RFR). RuvA specifically binds to HJ cruciform DNA, conferring on it an open structure. The RuvB hexamer acts as an ATP-dependent pump, pulling dsDNA into and through the RuvAB complex. RuvB forms 2 homohexamers on either side of HJ DNA bound by 1 or 2 RuvA tetramers; 4 subunits per hexamer contact DNA at a time. Coordinated motions by a converter formed by DNA-disengaged RuvB subunits stimulates ATP hydrolysis and nucleotide exchange. Immobilization of the converter enables RuvB to convert the ATP-contained energy into a lever motion, pulling 2 nucleotides of DNA out of the RuvA tetramer per ATP hydrolyzed, thus driving DNA branch migration. The RuvB motors rotate together with the DNA substrate, which together with the progressing nucleotide cycle form the mechanistic basis for DNA recombination by continuous HJ branch migration. Branch migration allows RuvC to scan DNA until it finds its consensus sequence, where it cleaves and resolves cruciform DNA. The sequence is that of Holliday junction branch migration complex subunit RuvB from Nitratiruptor sp. (strain SB155-2).